Here is a 96-residue protein sequence, read N- to C-terminus: Large ribosomal subunit protein bL27 (96 aa).

A propeptide spanning residues 1–9 (MLRLDLQFF) is cleaved from the precursor. Positions 14–35 (GVGSTKNGRDSQSKRLGAKRAD) are disordered.

This sequence belongs to the bacterial ribosomal protein bL27 family. Post-translationally, the N-terminus is cleaved by ribosomal processing cysteine protease Prp.

This is Large ribosomal subunit protein bL27 from Bacillus cytotoxicus (strain DSM 22905 / CIP 110041 / 391-98 / NVH 391-98).